Consider the following 122-residue polypeptide: UPF0102 protein Dred_2035 (122 aa).

It belongs to the UPF0102 family.

This chain is UPF0102 protein Dred_2035, found in Desulforamulus reducens (strain ATCC BAA-1160 / DSM 100696 / MI-1) (Desulfotomaculum reducens).